Consider the following 495-residue polypeptide: MSEEMNDQMLVRRQKLQELYDLGIDPFGSKFDRSGLSSDLKEEWDQYSKEELVEKEADSHVAIAGRLMTKRGKGKAGFAHVQDLAGQIQIYVRKDQVGDDEFDLWKNADLGDIVGVEGVMFKTNTGELSVKAKKFTLLTKSLRPLPDKFHGLQDIEQRYRQRYLDLITNEDSTRTFINRSKIIQEMRNYLNNKGFLEVETPMMHQIAGGAAARPFVTHHNALDATLYMRIAIELHLKRLIVGGLEKVYEIGRVFRNEGVSTRHNPEFTMIELYEAYADYHDIMDLTESMVRHIANEVLGSAKVQYNGETIDLESAWTRLHIVDAVKEATGVDFYEVKSDEERKALAKEHGIEIKDTMKYGHILNEFFEQKVEETLIQPTFIYGHPTEISPLAKKNPEDPRFTDRFELFIVGREHANRFTELNDPIDQKGRFEAQLVEKAQGNDEAHEMDEDYIEALEYGMPPTGGLGIGIDRLVMLLTDSPSIRDVLLFPYMRQK.

Residues glutamate 406 and glutamate 413 each contribute to the Mg(2+) site.

The protein belongs to the class-II aminoacyl-tRNA synthetase family. Homodimer. Requires Mg(2+) as cofactor.

It localises to the cytoplasm. The catalysed reaction is tRNA(Lys) + L-lysine + ATP = L-lysyl-tRNA(Lys) + AMP + diphosphate. In Staphylococcus aureus, this protein is Lysine--tRNA ligase (lysS).